A 659-amino-acid polypeptide reads, in one-letter code: Alpha-galactosidase D (659 aa).

A signal peptide spans 1 to 20 (MRALVPMVVAATALASPAPA). Residues Asn48, Asn86, and Asn130 are each glycosylated (N-linked (GlcNAc...) asparagine). Cys125 and Cys158 are joined by a disulfide. Asp156 (nucleophile) is an active-site residue. Residue Asn183 is glycosylated (N-linked (GlcNAc...) asparagine). 201–205 (EWGID) provides a ligand contact to substrate. Asp223 functions as the Proton donor in the catalytic mechanism. Asn438, Asn450, Asn484, Asn551, and Asn583 each carry an N-linked (GlcNAc...) asparagine glycan.

Belongs to the glycosyl hydrolase 27 family.

The protein resides in the secreted. It catalyses the reaction Hydrolysis of terminal, non-reducing alpha-D-galactose residues in alpha-D-galactosides, including galactose oligosaccharides, galactomannans and galactolipids.. In terms of biological role, hydrolyzes a variety of simple alpha-D-galactoside as well as more complex molecules such as oligosaccharides and polysaccharides. Active on paranitrophenyl-alpha-galactoside but not on raffinose, locust bean gum and gum guar. The chain is Alpha-galactosidase D (aglD) from Emericella nidulans (strain FGSC A4 / ATCC 38163 / CBS 112.46 / NRRL 194 / M139) (Aspergillus nidulans).